The following is a 316-amino-acid chain: Glutamyl endopeptidase (316 aa).

The N-terminal stretch at 1 to 30 (MVSKKSVKRGLITGLIGISIYSLGMHPAQA) is a signal peptide. The propeptide occupies 31–94 (APSPHTPVSS…SPAKAPYSIK (64 aa)). An intrachain disulfide couples cysteine 126 to cysteine 142. Residues histidine 141 and serine 261 each act as charge relay system in the active site. Cysteine 275 and cysteine 279 form a disulfide bridge.

This sequence belongs to the peptidase S1B family.

The protein localises to the secreted. It carries out the reaction Preferential cleavage: Glu-|-Xaa, Asp-|-Xaa.. Specific for hydrolysis of peptide bonds on the carboxyl side of acidic amino acid residues, with a strong preference for Glu. The protein is Glutamyl endopeptidase (blaSE) of Bacillus licheniformis (strain ATCC 14580 / DSM 13 / JCM 2505 / CCUG 7422 / NBRC 12200 / NCIMB 9375 / NCTC 10341 / NRRL NRS-1264 / Gibson 46).